The chain runs to 466 residues: Soluble pyridine nucleotide transhydrogenase (466 aa).

Residue Glu36–Cys45 coordinates FAD.

It belongs to the class-I pyridine nucleotide-disulfide oxidoreductase family. Requires FAD as cofactor.

It is found in the cytoplasm. It carries out the reaction NAD(+) + NADPH = NADH + NADP(+). Its function is as follows. Conversion of NADPH, generated by peripheral catabolic pathways, to NADH, which can enter the respiratory chain for energy generation. The sequence is that of Soluble pyridine nucleotide transhydrogenase from Klebsiella pneumoniae subsp. pneumoniae (strain ATCC 700721 / MGH 78578).